Reading from the N-terminus, the 196-residue chain is Imidazoleglycerol-phosphate dehydratase (196 aa).

The protein belongs to the imidazoleglycerol-phosphate dehydratase family.

It localises to the cytoplasm. It carries out the reaction D-erythro-1-(imidazol-4-yl)glycerol 3-phosphate = 3-(imidazol-4-yl)-2-oxopropyl phosphate + H2O. The protein operates within amino-acid biosynthesis; L-histidine biosynthesis; L-histidine from 5-phospho-alpha-D-ribose 1-diphosphate: step 6/9. This is Imidazoleglycerol-phosphate dehydratase from Solidesulfovibrio magneticus (strain ATCC 700980 / DSM 13731 / RS-1) (Desulfovibrio magneticus).